Consider the following 410-residue polypeptide: Cysteine desulfurase IscS (410 aa).

Residues 80–81 (AT), asparagine 160, glutamine 188, and 208–210 (SGH) each bind pyridoxal 5'-phosphate. N6-(pyridoxal phosphate)lysine is present on lysine 211. Residue threonine 248 participates in pyridoxal 5'-phosphate binding. Cysteine 334 functions as the Cysteine persulfide intermediate in the catalytic mechanism. Cysteine 334 provides a ligand contact to [2Fe-2S] cluster.

This sequence belongs to the class-V pyridoxal-phosphate-dependent aminotransferase family. NifS/IscS subfamily. As to quaternary structure, homodimer. Forms a heterotetramer with IscU, interacts with other sulfur acceptors. Pyridoxal 5'-phosphate serves as cofactor.

It is found in the cytoplasm. The catalysed reaction is (sulfur carrier)-H + L-cysteine = (sulfur carrier)-SH + L-alanine. It participates in cofactor biosynthesis; iron-sulfur cluster biosynthesis. Its function is as follows. Master enzyme that delivers sulfur to a number of partners involved in Fe-S cluster assembly, tRNA modification or cofactor biosynthesis. Catalyzes the removal of elemental sulfur atoms from cysteine to produce alanine. Functions as a sulfur delivery protein for Fe-S cluster synthesis onto IscU, an Fe-S scaffold assembly protein, as well as other S acceptor proteins. In Rickettsia akari (strain Hartford), this protein is Cysteine desulfurase IscS.